Here is a 130-residue protein sequence, read N- to C-terminus: Large ribosomal subunit protein eL32 (130 aa).

This sequence belongs to the eukaryotic ribosomal protein eL32 family.

This is Large ribosomal subunit protein eL32 (rpl32e) from Pyrococcus horikoshii (strain ATCC 700860 / DSM 12428 / JCM 9974 / NBRC 100139 / OT-3).